Here is a 279-residue protein sequence, read N- to C-terminus: Thymidylate synthase (279 aa).

133-134 (RR) serves as a coordination point for dUMP. Cys154 serves as the catalytic Nucleophile. Residues 178 to 181 (RSND), Asn189, and 219 to 221 (HIY) contribute to the dUMP site. Asp181 contacts (6R)-5,10-methylene-5,6,7,8-tetrahydrofolate. Ala278 is a (6R)-5,10-methylene-5,6,7,8-tetrahydrofolate binding site.

This sequence belongs to the thymidylate synthase family. Bacterial-type ThyA subfamily. In terms of assembly, homodimer.

The protein resides in the cytoplasm. It carries out the reaction dUMP + (6R)-5,10-methylene-5,6,7,8-tetrahydrofolate = 7,8-dihydrofolate + dTMP. It participates in pyrimidine metabolism; dTTP biosynthesis. In terms of biological role, catalyzes the reductive methylation of 2'-deoxyuridine-5'-monophosphate (dUMP) to 2'-deoxythymidine-5'-monophosphate (dTMP) while utilizing 5,10-methylenetetrahydrofolate (mTHF) as the methyl donor and reductant in the reaction, yielding dihydrofolate (DHF) as a by-product. This enzymatic reaction provides an intracellular de novo source of dTMP, an essential precursor for DNA biosynthesis. This is Thymidylate synthase from Streptococcus mutans serotype c (strain ATCC 700610 / UA159).